The chain runs to 76 residues: Conotoxin Cal5a L3 (76 aa).

Residues 1-22 (MRFYIGLMAALMLTSVLRTDSA) form the signal peptide. Positions 23–42 (SVGQTGTKSELAVIERVIRQ) are excised as a propeptide. 4-hydroxyproline is present on proline 50. Residues proline 58, proline 62, and proline 64 each carry the 4-hydroxyproline; partial modification.

It belongs to the conotoxin T superfamily. Post-translationally, contains 2 disulfide bonds that can be either 'C1-C3, C2-C4' or 'C1-C4, C2-C3', since these disulfide connectivities have been observed for conotoxins with cysteine framework V (for examples, see AC P0DQQ7 and AC P81755). In terms of tissue distribution, expressed by the venom duct.

The protein resides in the secreted. Functionally, probable neurotoxin with unknown target. Possibly targets ion channels. The sequence is that of Conotoxin Cal5a L3 from Californiconus californicus (California cone).